The sequence spans 249 residues: Phosphoribosylaminoimidazole-succinocarboxamide synthase (249 aa).

Belongs to the SAICAR synthetase family.

The enzyme catalyses 5-amino-1-(5-phospho-D-ribosyl)imidazole-4-carboxylate + L-aspartate + ATP = (2S)-2-[5-amino-1-(5-phospho-beta-D-ribosyl)imidazole-4-carboxamido]succinate + ADP + phosphate + 2 H(+). The protein operates within purine metabolism; IMP biosynthesis via de novo pathway; 5-amino-1-(5-phospho-D-ribosyl)imidazole-4-carboxamide from 5-amino-1-(5-phospho-D-ribosyl)imidazole-4-carboxylate: step 1/2. The polypeptide is Phosphoribosylaminoimidazole-succinocarboxamide synthase (Chloroflexus aurantiacus (strain ATCC 29366 / DSM 635 / J-10-fl)).